Here is a 458-residue protein sequence, read N- to C-terminus: Ribosomal protein uS12 methylthiotransferase RimO (458 aa).

Residues 6 to 116 (PKVGFVSLGC…VMEAVHAALP (111 aa)) enclose the MTTase N-terminal domain. [4Fe-4S] cluster is bound by residues Cys-15, Cys-51, Cys-80, Cys-147, Cys-151, and Cys-154. Positions 133–371 (LTPRHYAYLK…AKQAQISALR (239 aa)) constitute a Radical SAM core domain. In terms of domain architecture, TRAM spans 373-441 (ESKIGSVQQC…EHDLFGDALP (69 aa)).

It belongs to the methylthiotransferase family. RimO subfamily. It depends on [4Fe-4S] cluster as a cofactor.

The protein resides in the cytoplasm. The enzyme catalyses L-aspartate(89)-[ribosomal protein uS12]-hydrogen + (sulfur carrier)-SH + AH2 + 2 S-adenosyl-L-methionine = 3-methylsulfanyl-L-aspartate(89)-[ribosomal protein uS12]-hydrogen + (sulfur carrier)-H + 5'-deoxyadenosine + L-methionine + A + S-adenosyl-L-homocysteine + 2 H(+). In terms of biological role, catalyzes the methylthiolation of an aspartic acid residue of ribosomal protein uS12. In Xanthomonas euvesicatoria pv. vesicatoria (strain 85-10) (Xanthomonas campestris pv. vesicatoria), this protein is Ribosomal protein uS12 methylthiotransferase RimO.